A 453-amino-acid chain; its full sequence is Tubulin alpha-1 chain (453 aa).

GTP contacts are provided by Gln11, Glu71, Gly144, Thr145, Thr179, Asn206, and Asn228. Glu71 is a binding site for Mg(2+). Glu254 is an active-site residue. The interval 433–453 (EEVGAETADGDGEEEEFGEEY) is disordered.

It belongs to the tubulin family. Dimer of alpha and beta chains. A typical microtubule is a hollow water-filled tube with an outer diameter of 25 nm and an inner diameter of 15 nM. Alpha-beta heterodimers associate head-to-tail to form protofilaments running lengthwise along the microtubule wall with the beta-tubulin subunit facing the microtubule plus end conferring a structural polarity. Microtubules usually have 13 protofilaments but different protofilament numbers can be found in some organisms and specialized cells. Mg(2+) is required as a cofactor. Undergoes a tyrosination/detyrosination cycle, the cyclic removal and re-addition of a C-terminal tyrosine residue by the enzymes tubulin tyrosine carboxypeptidase (TTCP) and tubulin tyrosine ligase (TTL), respectively.

It localises to the cytoplasm. Its subcellular location is the cytoskeleton. It catalyses the reaction GTP + H2O = GDP + phosphate + H(+). In terms of biological role, tubulin is the major constituent of microtubules, a cylinder consisting of laterally associated linear protofilaments composed of alpha- and beta-tubulin heterodimers. Microtubules grow by the addition of GTP-tubulin dimers to the microtubule end, where a stabilizing cap forms. Below the cap, tubulin dimers are in GDP-bound state, owing to GTPase activity of alpha-tubulin. The polypeptide is Tubulin alpha-1 chain (TUBA1) (Pelvetia fastigiata (Brown alga)).